A 294-amino-acid chain; its full sequence is uncharacterized protein (294 aa).

The Tyrosine-protein phosphatase domain maps to 13 to 151; that stretch reads QCSQIRPYLY…LIDLEQKLRG (139 aa). Residue cysteine 95 is the Phosphocysteine intermediate of the active site. A disordered region spans residues 234–294; the sequence is PTLLVPSSSS…WRLSFHKDVV (61 aa).

Belongs to the protein-tyrosine phosphatase family. Non-receptor class dual specificity subfamily.

This is an uncharacterized protein from Caenorhabditis elegans.